The sequence spans 404 residues: Ubiquitin-like modifier-activating enzyme 5 (404 aa).

ATP is bound by residues G83, D104, K127, N150, and N184. Residues C226 and C229 each contribute to the Zn(2+) site. The Glycyl thioester intermediate role is filled by C250. Residues C303 and C308 each coordinate Zn(2+). Positions 372–393 (APEKSSETSEETVTAATADETS) are disordered. Over residues 382 to 391 (ETVTAATADE) the composition is skewed to low complexity.

It belongs to the ubiquitin-activating E1 family. UBA5 subfamily.

Functionally, E1-like enzyme which activates UFM1. The polypeptide is Ubiquitin-like modifier-activating enzyme 5 (Drosophila simulans (Fruit fly)).